A 229-amino-acid polypeptide reads, in one-letter code: Ribonuclease 3 (229 aa).

The 132-residue stretch at 5 to 136 folds into the RNase III domain; it reads LAELERALGI…VIGAIYLDQG (132 aa). Glu49 contacts Mg(2+). The active site involves Asp53. Mg(2+)-binding residues include Asp122 and Glu125. Glu125 is a catalytic residue. The region spanning 161-229 is the DRBM domain; sequence DPTTRLQEIV…AQAALADIDR (69 aa).

Belongs to the ribonuclease III family. As to quaternary structure, homodimer. The cofactor is Mg(2+).

Its subcellular location is the cytoplasm. It carries out the reaction Endonucleolytic cleavage to 5'-phosphomonoester.. Digests double-stranded RNA. Involved in the processing of primary rRNA transcript to yield the immediate precursors to the large and small rRNAs (23S and 16S). Processes some mRNAs, and tRNAs when they are encoded in the rRNA operon. Processes pre-crRNA and tracrRNA of type II CRISPR loci if present in the organism. The sequence is that of Ribonuclease 3 from Chloroflexus aggregans (strain MD-66 / DSM 9485).